We begin with the raw amino-acid sequence, 360 residues long: Phospho-N-acetylmuramoyl-pentapeptide-transferase (360 aa).

Helical transmembrane passes span 21–41 (YLSF…LWMG), 73–93 (TMGG…WANL), 94–114 (SNPY…VGFV), 132–152 (WKYF…YAYG), 168–188 (VMPQ…VGTS), 199–219 (GLAI…AWAT), 236–256 (ASEL…FLWF), 263–283 (VFMG…IAVL), 288–308 (LVLV…ILQV), and 338–358 (VIVR…ATLK).

This sequence belongs to the glycosyltransferase 4 family. MraY subfamily. It depends on Mg(2+) as a cofactor.

It is found in the cell inner membrane. The catalysed reaction is UDP-N-acetyl-alpha-D-muramoyl-L-alanyl-gamma-D-glutamyl-meso-2,6-diaminopimeloyl-D-alanyl-D-alanine + di-trans,octa-cis-undecaprenyl phosphate = di-trans,octa-cis-undecaprenyl diphospho-N-acetyl-alpha-D-muramoyl-L-alanyl-D-glutamyl-meso-2,6-diaminopimeloyl-D-alanyl-D-alanine + UMP. It functions in the pathway cell wall biogenesis; peptidoglycan biosynthesis. Its function is as follows. Catalyzes the initial step of the lipid cycle reactions in the biosynthesis of the cell wall peptidoglycan: transfers peptidoglycan precursor phospho-MurNAc-pentapeptide from UDP-MurNAc-pentapeptide onto the lipid carrier undecaprenyl phosphate, yielding undecaprenyl-pyrophosphoryl-MurNAc-pentapeptide, known as lipid I. In Vibrio vulnificus (strain CMCP6), this protein is Phospho-N-acetylmuramoyl-pentapeptide-transferase.